A 453-amino-acid chain; its full sequence is AP-4 complex subunit mu-1 (453 aa).

Residues 184–452 (KNEVFLDVVE…LSHSNAYVIR (269 aa)) enclose the MHD domain. Residues 383-403 (PGLQGPPSRGPSPSAPPLGLG) are disordered.

It belongs to the adaptor complexes medium subunit family. As to quaternary structure, adaptor protein complex 4 (AP-4) is a heterotetramer composed of two large adaptins (epsilon-type subunit AP4E1 and beta-type subunit AP4B1), a medium adaptin (mu-type subunit AP4M1) and a small adaptin (sigma-type AP4S1). Interacts with tyrosine-based sorting signals on the cytoplasmic tail of cargo proteins such as APP, ATG9A, LAMP2 and NAGPA. Interacts with the C-terminal domain of GRID2. Interacts with GRIA1 and GRIA2; the interaction is indirect via CACNG3. Interacts with CACNG3; CACNG3 associates GRIA1 and GRIA2 with the adaptor protein complex 4 (AP-4) to target them to the somatodendritic compartment of neurons. Interacts with HOOK1 and HOOK2; the interactions are direct, mediate the interaction between FTS-Hook-FHIP (FHF) complex and AP-4 and the perinuclear distribution of AP-4. In terms of tissue distribution, high levels in the olfactory bulb, the cerebral cortex, the granule and Purkinje cell layers of the cerebellar cortex and the CA3 region of the hippocampus. Low levels found in molecular layer of cerebellum.

It localises to the golgi apparatus. The protein resides in the trans-Golgi network membrane. Its subcellular location is the early endosome. Component of the adaptor protein complex 4 (AP-4). Adaptor protein complexes are vesicle coat components involved both in vesicle formation and cargo selection. They control the vesicular transport of proteins in different trafficking pathways. AP-4 forms a non clathrin-associated coat on vesicles departing the trans-Golgi network (TGN) and may be involved in the targeting of proteins from the trans-Golgi network (TGN) to the endosomal-lysosomal system. It is also involved in protein sorting to the basolateral membrane in epithelial cells and the proper asymmetric localization of somatodendritic proteins in neurons. Within AP-4, the mu-type subunit AP4M1 is directly involved in the recognition and binding of tyrosine-based sorting signals found in the cytoplasmic part of cargos. The adaptor protein complex 4 (AP-4) may also recognize other types of sorting signal. This chain is AP-4 complex subunit mu-1, found in Rattus norvegicus (Rat).